The sequence spans 259 residues: Truncated Ankyrin repeat protein OPG003 (259 aa).

Belongs to the orthopoxvirus OPG003 family.

The chain is Truncated Ankyrin repeat protein OPG003 (OPG003) from Vaccinia virus (strain Copenhagen) (VACV).